A 302-amino-acid chain; its full sequence is Sulfotransferase 1C4 (302 aa).

55–60 (KAGTTW) is a binding site for 3'-phosphoadenylyl sulfate. 113-115 (KTH) lines the substrate pocket. Residue His115 is the Proton acceptor of the active site. 3'-phosphoadenylyl sulfate is bound by residues Arg137, Ser145, Tyr200, 234 to 239 (TSFDVM), and 262 to 266 (FMRKG).

Belongs to the sulfotransferase 1 family. In terms of tissue distribution, expressed at high levels in fetal lung and kidney and at low levels in fetal heart, adult kidney, ovary and spinal cord.

The protein resides in the cytoplasm. The protein localises to the cytosol. It carries out the reaction a phenol + 3'-phosphoadenylyl sulfate = an aryl sulfate + adenosine 3',5'-bisphosphate + H(+). The enzyme catalyses 17beta-estradiol + 3'-phosphoadenylyl sulfate = 17beta-estradiol 3-sulfate + adenosine 3',5'-bisphosphate + H(+). It catalyses the reaction bisphenol A + 3'-phosphoadenylyl sulfate = bisphenyl A sulfate + adenosine 3',5'-bisphosphate + H(+). Functionally, sulfotransferase that utilizes 3'-phospho-5'-adenylyl sulfate (PAPS) as sulfonate donor to catalyze the sulfate conjugation of phenolic compounds. Can also sulfonate estrogenic compounds, however, the dietary flavonoids (phytoestrogen) and environmental estrogens, like bisphenol A are better substrates than 17beta-estradiol (E2). Mediates the sulfation of doxorubicin and its analog epirubicin, two antitumor anthracyclines. The protein is Sulfotransferase 1C4 of Homo sapiens (Human).